The primary structure comprises 958 residues: Glycine dehydrogenase (decarboxylating) (958 aa).

Residue Lys703 is modified to N6-(pyridoxal phosphate)lysine.

It belongs to the GcvP family. The glycine cleavage system is composed of four proteins: P, T, L and H. Requires pyridoxal 5'-phosphate as cofactor.

It catalyses the reaction N(6)-[(R)-lipoyl]-L-lysyl-[glycine-cleavage complex H protein] + glycine + H(+) = N(6)-[(R)-S(8)-aminomethyldihydrolipoyl]-L-lysyl-[glycine-cleavage complex H protein] + CO2. The glycine cleavage system catalyzes the degradation of glycine. The P protein binds the alpha-amino group of glycine through its pyridoxal phosphate cofactor; CO(2) is released and the remaining methylamine moiety is then transferred to the lipoamide cofactor of the H protein. The polypeptide is Glycine dehydrogenase (decarboxylating) (Nitrobacter hamburgensis (strain DSM 10229 / NCIMB 13809 / X14)).